The chain runs to 354 residues: Rhodopsin (354 aa).

Residues 1-36 (MNGTEGPMFYVPMSNATGVVKSPYDYPQYYLVAPWA) lie on the Extracellular side of the membrane. N-linked (GlcNAc...) asparagine glycosylation is found at N2 and N15. A helical membrane pass occupies residues 37-61 (YGCLAAYMFFLIITGFPINFLTLYV). Residues 62-73 (TIEHKKLRTPLN) lie on the Cytoplasmic side of the membrane. A helical transmembrane segment spans residues 74–96 (YILLNLAISDLFMVFGGFTTTMY). Residues 97 to 110 (TSLHGYFVFGRIGC) lie on the Extracellular side of the membrane. A disulfide bond links C110 and C187. A helical transmembrane segment spans residues 111-133 (NLEGFFATLGGEMGLWSLVVLAF). Positions 134 to 136 (ERW) match the 'Ionic lock' involved in activated form stabilization motif. The Cytoplasmic segment spans residues 134–152 (ERWMVVCKPVSNFRFGENH). A helical transmembrane segment spans residues 153–173 (AIMGVVFTWFMACTCAVPPLV). Residues 174-202 (GWSRYIPEGMQCSCGVDYYTRAPGYNNES) are Extracellular-facing. Residues 203–224 (FVIYMFLVHFIIPLIVIFFCYG) traverse the membrane as a helical segment. Over 225–252 (RLVCTVKDAAAQQQESETTQRAEREVTR) the chain is Cytoplasmic. A helical transmembrane segment spans residues 253–274 (MVVIMVIGFLICWIPYASVAWY). Over 275–286 (IFTHQGSEFGPV) the chain is Extracellular. Residues 287-308 (FMTVPAFFAKSAAVYNPCIYIC) traverse the membrane as a helical segment. An N6-(retinylidene)lysine modification is found at K296. Over 309–354 (MNKQFRHCMITTLCCGKNPFEEEEGASTTASKTEASSVSSSSVSPA) the chain is Cytoplasmic. Residues C322 and C323 are each lipidated (S-palmitoyl cysteine). A disordered region spans residues 333-354 (GASTTASKTEASSVSSSSVSPA). Residues 334–354 (ASTTASKTEASSVSSSSVSPA) are compositionally biased toward low complexity.

This sequence belongs to the G-protein coupled receptor 1 family. Opsin subfamily. In terms of processing, phosphorylated on some or all of the serine and threonine residues present in the C-terminal region. Post-translationally, contains one covalently linked retinal chromophore.

Its subcellular location is the membrane. It is found in the cell projection. The protein resides in the cilium. The protein localises to the photoreceptor outer segment. Functionally, photoreceptor required for image-forming vision at low light intensity. While most salt water fish species use retinal as chromophore, most freshwater fish use 3-dehydroretinal, or a mixture of retinal and 3-dehydroretinal. Light-induced isomerization of 11-cis to all-trans retinal triggers a conformational change that activates signaling via G-proteins. Subsequent receptor phosphorylation mediates displacement of the bound G-protein alpha subunit by arrestin and terminates signaling. This Cyprinus carpio (Common carp) protein is Rhodopsin (rho).